The chain runs to 431 residues: MSDKLLTIDLSHVYGFDKEIIFKKYQKKVDQIHQDFLAHKLADGHMTGWYDQPDQNHQFLLKTINQIDKKFKSLKVTDIVYVGIGGSFTGIKTVLDFLKPKQRTGLKIHFVPDLSAFQAASVIKEIKNKSWALITTSKSGRTLEPALNFRIFRNLLNKRYGNKHYQRVVVITDEKKGLLTKMASNHGYQKLVIDSNIGGRFSTLSPAGLLLAKLFGHDPKAILKGTLQAKKDLQTTSLENNSAYLYAVVRHWLYTTKKFKIEVCIAYHSLYEYLLLQHRQLFGESEGKNDKSLFPTFSIFTVDLHSMGQLYQEGEKVFFETVIDVKNPLVNINLPPSDFDNDDELDFLLDKSLNEISDVAIDSVIKAHYQANVSIIKLTLKEQSAFMFGYFYFWLSVATVMSGSLLGHNVFNQPGVEVYKKLMFEKLRSGH.

Glutamate 284 acts as the Proton donor in catalysis. Catalysis depends on residues histidine 305 and lysine 420.

This sequence belongs to the GPI family.

Its subcellular location is the cytoplasm. The catalysed reaction is alpha-D-glucose 6-phosphate = beta-D-fructose 6-phosphate. It participates in carbohydrate biosynthesis; gluconeogenesis. Its pathway is carbohydrate degradation; glycolysis; D-glyceraldehyde 3-phosphate and glycerone phosphate from D-glucose: step 2/4. Its function is as follows. Catalyzes the reversible isomerization of glucose-6-phosphate to fructose-6-phosphate. The polypeptide is Glucose-6-phosphate isomerase (Mycoplasma genitalium (strain ATCC 33530 / DSM 19775 / NCTC 10195 / G37) (Mycoplasmoides genitalium)).